We begin with the raw amino-acid sequence, 346 residues long: E3 ubiquitin-protein ligase MARCHF9 (346 aa).

Disordered regions lie at residues 20–39 and 47–92; these read GGGR…GGCG and STRD…PGAL. The span at 63–75 shows a compositional bias: basic and acidic residues; it reads PRARGLAGDKEPR. A compositionally biased stretch (pro residues) spans 77–90; it reads GPLPPPAPPLPPPG. Residues 102-162 form an RING-CH-type zinc finger; sequence DSGLRTPQCR…ELCYFKYQVL (61 aa). C110, C113, C126, C128, H136, C139, C152, and C155 together coordinate Zn(2+). Transmembrane regions (helical) follow at residues 185-205 and 219-239; these read IAAI…LIWS and LFQI…GLII. Disordered stretches follow at residues 273–301 and 326–346; these read DAGG…RPPA and PPDA…VTTV. Positions 284 to 296 are enriched in polar residues; it reads PRNSRTGPTSGAT.

Homodimer. In terms of tissue distribution, ubiquitously expressed.

The protein localises to the golgi apparatus membrane. It localises to the lysosome membrane. It carries out the reaction S-ubiquitinyl-[E2 ubiquitin-conjugating enzyme]-L-cysteine + [acceptor protein]-L-lysine = [E2 ubiquitin-conjugating enzyme]-L-cysteine + N(6)-ubiquitinyl-[acceptor protein]-L-lysine.. The protein operates within protein modification; protein ubiquitination. In terms of biological role, E3 ubiquitin-protein ligase that may mediate ubiquitination of MHC-I, CD4 and ICAM1, and promote their subsequent endocytosis and sorting to lysosomes via multivesicular bodies. E3 ubiquitin ligases accept ubiquitin from an E2 ubiquitin-conjugating enzyme in the form of a thioester and then directly transfer the ubiquitin to targeted substrates. The polypeptide is E3 ubiquitin-protein ligase MARCHF9 (Homo sapiens (Human)).